The sequence spans 258 residues: Type III pantothenate kinase (258 aa).

6 to 13 is an ATP binding site; sequence DVGNTNTV. Residues Tyr100 and 107-110 contribute to the substrate site; that span reads GADR. The Proton acceptor role is filled by Asp109. Residue Asp129 participates in K(+) binding. Thr132 contributes to the ATP binding site. Substrate is bound at residue Thr184.

Belongs to the type III pantothenate kinase family. As to quaternary structure, homodimer. It depends on NH4(+) as a cofactor. K(+) is required as a cofactor.

The protein localises to the cytoplasm. The enzyme catalyses (R)-pantothenate + ATP = (R)-4'-phosphopantothenate + ADP + H(+). It functions in the pathway cofactor biosynthesis; coenzyme A biosynthesis; CoA from (R)-pantothenate: step 1/5. Functionally, catalyzes the phosphorylation of pantothenate (Pan), the first step in CoA biosynthesis. This chain is Type III pantothenate kinase, found in Geobacillus kaustophilus (strain HTA426).